Consider the following 525-residue polypeptide: GMP synthase [glutamine-hydrolyzing] (525 aa).

The 198-residue stretch at 3-200 (KILILDFGSQ…VLHVAGCKPS (198 aa)) folds into the Glutamine amidotransferase type-1 domain. The Nucleophile role is filled by C79. Residues H174 and E176 contribute to the active site. One can recognise a GMPS ATP-PPase domain in the interval 201–393 (WTMPNYIDEA…LGLPHDMVYR (193 aa)). 228–234 (SGGVDSS) contacts ATP.

As to quaternary structure, homodimer.

The catalysed reaction is XMP + L-glutamine + ATP + H2O = GMP + L-glutamate + AMP + diphosphate + 2 H(+). It functions in the pathway purine metabolism; GMP biosynthesis; GMP from XMP (L-Gln route): step 1/1. In terms of biological role, catalyzes the synthesis of GMP from XMP. This is GMP synthase [glutamine-hydrolyzing] from Chromobacterium violaceum (strain ATCC 12472 / DSM 30191 / JCM 1249 / CCUG 213 / NBRC 12614 / NCIMB 9131 / NCTC 9757 / MK).